We begin with the raw amino-acid sequence, 323 residues long: GTP 3',8-cyclase (323 aa).

Residues 4–228 (KYGRSIDYLR…VPVNIQNNGP (225 aa)) enclose the Radical SAM core domain. Arg-13 provides a ligand contact to GTP. Cys-20 and Cys-24 together coordinate [4Fe-4S] cluster. Residue Tyr-26 coordinates S-adenosyl-L-methionine. [4Fe-4S] cluster is bound at residue Cys-27. Arg-63 contacts GTP. Gly-67 is an S-adenosyl-L-methionine binding site. Position 94 (Thr-94) interacts with GTP. Ser-118 is a binding site for S-adenosyl-L-methionine. Lys-155 contributes to the GTP binding site. Residue Met-189 participates in S-adenosyl-L-methionine binding. [4Fe-4S] cluster is bound by residues Cys-252 and Cys-255. Position 257–259 (257–259 (RMR)) interacts with GTP. Residue Cys-269 coordinates [4Fe-4S] cluster.

This sequence belongs to the radical SAM superfamily. MoaA family. As to quaternary structure, monomer and homodimer. [4Fe-4S] cluster serves as cofactor.

The enzyme catalyses GTP + AH2 + S-adenosyl-L-methionine = (8S)-3',8-cyclo-7,8-dihydroguanosine 5'-triphosphate + 5'-deoxyadenosine + L-methionine + A + H(+). The protein operates within cofactor biosynthesis; molybdopterin biosynthesis. Its function is as follows. Catalyzes the cyclization of GTP to (8S)-3',8-cyclo-7,8-dihydroguanosine 5'-triphosphate. The polypeptide is GTP 3',8-cyclase (Petrotoga mobilis (strain DSM 10674 / SJ95)).